The chain runs to 306 residues: Ethylmalonyl-CoA decarboxylase (306 aa).

The residue at position 216 (Lys216) is an N6-acetyllysine; alternate. Position 216 is an N6-succinyllysine; alternate (Lys216).

It belongs to the enoyl-CoA hydratase/isomerase family.

It is found in the cytoplasm. It localises to the cytosol. The enzyme catalyses (2S)-ethylmalonyl-CoA + H(+) = butanoyl-CoA + CO2. It catalyses the reaction (S)-methylmalonyl-CoA + H(+) = propanoyl-CoA + CO2. The catalysed reaction is (2R)-ethylmalonyl-CoA + H(+) = butanoyl-CoA + CO2. Decarboxylates ethylmalonyl-CoA, a potentially toxic metabolite, to form butyryl-CoA, suggesting it might be involved in metabolite proofreading. Acts preferentially on (S)-ethylmalonyl-CoA but also has some activity on the (R)-isomer. Also has methylmalonyl-CoA decarboxylase activity at lower level. In Bos taurus (Bovine), this protein is Ethylmalonyl-CoA decarboxylase (ECHDC1).